Here is a 102-residue protein sequence, read N- to C-terminus: NADH-quinone oxidoreductase subunit K (102 aa).

3 consecutive transmembrane segments (helical) span residues 5–25 (LSHF…GIIL), 30–50 (IIVV…NLVS), and 62–82 (VFSL…LAIL).

Belongs to the complex I subunit 4L family. NDH-1 is composed of 14 different subunits. Subunits NuoA, H, J, K, L, M, N constitute the membrane sector of the complex.

It localises to the cell inner membrane. It catalyses the reaction a quinone + NADH + 5 H(+)(in) = a quinol + NAD(+) + 4 H(+)(out). NDH-1 shuttles electrons from NADH, via FMN and iron-sulfur (Fe-S) centers, to quinones in the respiratory chain. The immediate electron acceptor for the enzyme in this species is believed to be ubiquinone. Couples the redox reaction to proton translocation (for every two electrons transferred, four hydrogen ions are translocated across the cytoplasmic membrane), and thus conserves the redox energy in a proton gradient. This is NADH-quinone oxidoreductase subunit K from Methylocella silvestris (strain DSM 15510 / CIP 108128 / LMG 27833 / NCIMB 13906 / BL2).